A 921-amino-acid chain; its full sequence is Isoleucine--tRNA ligase (921 aa).

The short motif at 57 to 67 is the 'HIGH' region element; it reads PYANGDIHMGH. Glu-552 is an L-isoleucyl-5'-AMP binding site. The 'KMSKS' region signature appears at 593–597; that stretch reads KMSKS. Lys-596 lines the ATP pocket. Zn(2+) contacts are provided by Cys-888, Cys-891, Cys-908, and Cys-911.

The protein belongs to the class-I aminoacyl-tRNA synthetase family. IleS type 1 subfamily. As to quaternary structure, monomer. The cofactor is Zn(2+).

The protein localises to the cytoplasm. The catalysed reaction is tRNA(Ile) + L-isoleucine + ATP = L-isoleucyl-tRNA(Ile) + AMP + diphosphate. Catalyzes the attachment of isoleucine to tRNA(Ile). As IleRS can inadvertently accommodate and process structurally similar amino acids such as valine, to avoid such errors it has two additional distinct tRNA(Ile)-dependent editing activities. One activity is designated as 'pretransfer' editing and involves the hydrolysis of activated Val-AMP. The other activity is designated 'posttransfer' editing and involves deacylation of mischarged Val-tRNA(Ile). The chain is Isoleucine--tRNA ligase from Bacillus cereus (strain B4264).